Consider the following 215-residue polypeptide: Probable serine/threonine-protein kinase 2 (215 aa).

One can recognise a Protein kinase domain in the interval 1–205 (MKPEQLVYLN…WLLKEMEQLL (205 aa)).

It belongs to the protein kinase superfamily. Ser/Thr protein kinase family. As to quaternary structure, interacts with the kinase domain of host EIF2AK2.

It localises to the host cytoplasm. The enzyme catalyses L-seryl-[protein] + ATP = O-phospho-L-seryl-[protein] + ADP + H(+). The catalysed reaction is L-threonyl-[protein] + ATP = O-phospho-L-threonyl-[protein] + ADP + H(+). Its function is as follows. Plays a role in the inhibition of host eIF2alpha/EIF2S1 phosphorylation, thereby increasing viral fitness. In the insect host, targets the endogenous insect heme-regulated inhibitor (HRI)-like eIF2alpha kinase. The protein is Probable serine/threonine-protein kinase 2 (PK2) of Autographa californica nuclear polyhedrosis virus (AcMNPV).